The chain runs to 379 residues: Homoserine O-succinyltransferase (379 aa).

Residues 51 to 360 (NAVLICHALS…DSPYGHDAFL (310 aa)) form the AB hydrolase-1 domain. S157 acts as the Nucleophile in catalysis. A substrate-binding site is contributed by R227. Active-site residues include D323 and H356. D357 contacts substrate.

This sequence belongs to the AB hydrolase superfamily. MetX family. In terms of assembly, homodimer.

It localises to the cytoplasm. The catalysed reaction is L-homoserine + succinyl-CoA = O-succinyl-L-homoserine + CoA. Its pathway is amino-acid biosynthesis; L-methionine biosynthesis via de novo pathway; O-succinyl-L-homoserine from L-homoserine: step 1/1. Transfers a succinyl group from succinyl-CoA to L-homoserine, forming succinyl-L-homoserine. The protein is Homoserine O-succinyltransferase of Pseudomonas putida (strain W619).